A 529-amino-acid polypeptide reads, in one-letter code: Autoinducer-2 kinase (529 aa).

Belongs to the FGGY kinase family.

Its subcellular location is the cytoplasm. It carries out the reaction (S)-4,5-dihydroxypentane-2,3-dione + ATP = (2S)-2-hydroxy-3,4-dioxopentyl phosphate + ADP + H(+). In terms of biological role, catalyzes the phosphorylation of autoinducer-2 (AI-2) to phospho-AI-2, which subsequently inactivates the transcriptional regulator LsrR and leads to the transcription of the lsr operon. Phosphorylates the ring-open form of (S)-4,5-dihydroxypentane-2,3-dione (DPD), which is the precursor to all AI-2 signaling molecules, at the C5 position. In Yersinia enterocolitica serotype O:8 / biotype 1B (strain NCTC 13174 / 8081), this protein is Autoinducer-2 kinase.